The primary structure comprises 314 residues: Olfactory receptor 5G3 (314 aa).

Topologically, residues 1 to 24 (MEDKNQTVVTEFLLLGLTDHPYQK) are extracellular. A glycan (N-linked (GlcNAc...) asparagine) is linked at asparagine 5. The chain crosses the membrane as a helical span at residues 25–45 (IVLFFMFLFVYLITLGGNLGM). Over 46-97 (ITLIWIDPRLHTPMYFFLRHLSFVDICSSSSVVPKMLCNIFAEKKDITFLGC) the chain is Cytoplasmic. Cysteine 97 and cysteine 179 are joined by a disulfide. A helical membrane pass occupies residues 98 to 118 (AAQMWFFGLFEAAECFLLAAM). The Extracellular segment spans residues 119 to 143 (AYDRYVAICKPLLYTLIMSQQVCMQ). Residues 144–164 (LVVGPYAMALISTMTHTIFTF) traverse the membrane as a helical segment. Over 165-167 (CLP) the chain is Cytoplasmic. A helical membrane pass occupies residues 168–188 (FCGSNIINHFFCDIFPLLSLA). The Extracellular portion of the chain corresponds to 189 to 196 (CADTWVNK). A helical transmembrane segment spans residues 197 to 217 (FVLFVLAGAIGVLSGLIIMVS). Topologically, residues 218–237 (YICILMTILKIQTADGKQKA) are cytoplasmic. Residues 238 to 258 (FFTCFSHLAAVSILYGTLFLI) form a helical membrane-spanning segment. The Extracellular segment spans residues 259–268 (YVRPSSSSSL). A helical membrane pass occupies residues 269 to 289 (GIYKVISLFYTVVIPMVNPLI). At 290 to 314 (YSLRNKEVKDAFRRKIERKKFIIGR) the chain is on the cytoplasmic side.

The protein belongs to the G-protein coupled receptor 1 family.

The protein resides in the cell membrane. Its function is as follows. Odorant receptor. In Homo sapiens (Human), this protein is Olfactory receptor 5G3 (OR5G3).